Here is a 455-residue protein sequence, read N- to C-terminus: Serine--tRNA ligase (455 aa).

252–254 (TAE) is a binding site for L-serine. ATP contacts are provided by residues 283 to 285 (RKE) and Val-299. An L-serine-binding site is contributed by Glu-306. 370–373 (EVVS) contacts ATP. Residue Thr-406 participates in L-serine binding.

Belongs to the class-II aminoacyl-tRNA synthetase family. Type-1 seryl-tRNA synthetase subfamily. Homodimer. The tRNA molecule binds across the dimer.

It is found in the cytoplasm. It carries out the reaction tRNA(Ser) + L-serine + ATP = L-seryl-tRNA(Ser) + AMP + diphosphate + H(+). The catalysed reaction is tRNA(Sec) + L-serine + ATP = L-seryl-tRNA(Sec) + AMP + diphosphate + H(+). Its pathway is aminoacyl-tRNA biosynthesis; selenocysteinyl-tRNA(Sec) biosynthesis; L-seryl-tRNA(Sec) from L-serine and tRNA(Sec): step 1/1. In terms of biological role, catalyzes the attachment of serine to tRNA(Ser). Is also able to aminoacylate tRNA(Sec) with serine, to form the misacylated tRNA L-seryl-tRNA(Sec), which will be further converted into selenocysteinyl-tRNA(Sec). The polypeptide is Serine--tRNA ligase (Pyrococcus furiosus (strain ATCC 43587 / DSM 3638 / JCM 8422 / Vc1)).